Reading from the N-terminus, the 2295-residue chain is Protein DOP1B (2295 aa).

Phosphoserine is present on residues S556 and S597. 4 disordered regions span residues 574–599 (AGDEEPSFPPLKSEDSGIGLSASSPE), 651–684 (GEENKPEEPPGKGNKGQTQSTEHPGRKSSWDPKP), 1034–1059 (CKEACGESEPQEGAPEERLPRGQFTT), and 1092–1136 (DLPD…LQDL). Residues 1111–1131 (ADTSSGHTDSENTSTFSSPSH) are compositionally biased toward polar residues. S1167 is subject to Phosphoserine.

Belongs to the DOP1 family. As to quaternary structure, homooligomer. Heterotrimer with ATP9A and MON2; this interaction is retromer-independent. Interacts with SNX3. In terms of tissue distribution, expressed in liver, heart and brain.

The protein resides in the early endosome membrane. It is found in the golgi apparatus membrane. May play a role in regulating membrane trafficking of cargo proteins. Together with ATP9A and MON2, regulates SNX3 retromer-mediated endosomal sorting of WLS away from lysosomal degradation. The protein is Protein DOP1B (Dop1b) of Mus musculus (Mouse).